We begin with the raw amino-acid sequence, 135 residues long: Large ribosomal subunit protein uL16c (135 aa).

Belongs to the universal ribosomal protein uL16 family. As to quaternary structure, part of the 50S ribosomal subunit.

It is found in the plastid. The protein localises to the chloroplast. In Gossypium barbadense (Sea Island cotton), this protein is Large ribosomal subunit protein uL16c.